The primary structure comprises 495 residues: Internal alternative NAD(P)H-ubiquinone oxidoreductase A1, mitochondrial (495 aa).

The N-terminal 41 residues, 1–41 (MPWFKNLIKISKTITNQSSSYKSITPLASPLLAQFLQFTKQ), are a transit peptide targeting the mitochondrion. Residue 61–91 (RIVVLGSGWAGCRLMKDIDTNIYDVVCVSPR) participates in FAD binding. 228-264 (LHCVVVGGGPTGVEFSGELSDFILKDVHQRYAHVKDY) contributes to the NAD(+) binding site. Residues 486–495 (LVFGRDISRI) carry the Microbody targeting signal motif.

Belongs to the NADH dehydrogenase family. FAD is required as a cofactor.

It is found in the mitochondrion inner membrane. It localises to the peroxisome. It catalyses the reaction a quinone + NADH + H(+) = a quinol + NAD(+). The enzyme catalyses a ubiquinone + NADH + H(+) = a ubiquinol + NAD(+). Its function is as follows. Alternative NADH-ubiquinone oxidoreductase which catalyzes the oxidation of mitochondrial NADH does not translocate protons across the inner mitochondrial membrane. The protein is Internal alternative NAD(P)H-ubiquinone oxidoreductase A1, mitochondrial (NDA1) of Solanum tuberosum (Potato).